The chain runs to 131 residues: Methylglyoxal synthase (131 aa).

An MGS-like domain is found at methionine 1–lysine 131. Substrate-binding positions include histidine 8, lysine 12, threonine 34–threonine 37, and serine 54–glycine 55. Aspartate 60 acts as the Proton donor/acceptor in catalysis. Histidine 87 lines the substrate pocket.

The protein belongs to the methylglyoxal synthase family.

The enzyme catalyses dihydroxyacetone phosphate = methylglyoxal + phosphate. Catalyzes the formation of methylglyoxal from dihydroxyacetone phosphate. In Bacillus mycoides (strain KBAB4) (Bacillus weihenstephanensis), this protein is Methylglyoxal synthase.